The following is a 314-amino-acid chain: Thymidylate synthase (314 aa).

DUMP-binding positions include Arg-32 and 176–177 (RR). The Nucleophile role is filled by Cys-196. DUMP is bound by residues 216-219 (RSCD), Asn-227, and 257-259 (HLY). Position 219 (Asp-219) interacts with (6R)-5,10-methylene-5,6,7,8-tetrahydrofolate. Position 313 (Ala-313) interacts with (6R)-5,10-methylene-5,6,7,8-tetrahydrofolate.

The protein belongs to the thymidylate synthase family. Bacterial-type ThyA subfamily. In terms of assembly, homodimer.

It localises to the cytoplasm. It carries out the reaction dUMP + (6R)-5,10-methylene-5,6,7,8-tetrahydrofolate = 7,8-dihydrofolate + dTMP. It participates in pyrimidine metabolism; dTTP biosynthesis. Catalyzes the reductive methylation of 2'-deoxyuridine-5'-monophosphate (dUMP) to 2'-deoxythymidine-5'-monophosphate (dTMP) while utilizing 5,10-methylenetetrahydrofolate (mTHF) as the methyl donor and reductant in the reaction, yielding dihydrofolate (DHF) as a by-product. This enzymatic reaction provides an intracellular de novo source of dTMP, an essential precursor for DNA biosynthesis. The chain is Thymidylate synthase from Novosphingobium aromaticivorans (strain ATCC 700278 / DSM 12444 / CCUG 56034 / CIP 105152 / NBRC 16084 / F199).